The following is a 384-amino-acid chain: tRNA-specific 2-thiouridylase MnmA (384 aa).

Residues 30 to 37 (GMSGGVDS) and M56 each bind ATP. The interval 116–118 (NPD) is interaction with target base in tRNA. C121 serves as the catalytic Nucleophile. Residues C121 and C218 are joined by a disulfide bond. G146 serves as a coordination point for ATP. The segment at 168–170 (KDQ) is interaction with tRNA. C218 serves as the catalytic Cysteine persulfide intermediate. The interaction with tRNA stretch occupies residues 330-331 (RY).

It belongs to the MnmA/TRMU family.

The protein localises to the cytoplasm. It carries out the reaction S-sulfanyl-L-cysteinyl-[protein] + uridine(34) in tRNA + AH2 + ATP = 2-thiouridine(34) in tRNA + L-cysteinyl-[protein] + A + AMP + diphosphate + H(+). Catalyzes the 2-thiolation of uridine at the wobble position (U34) of tRNA, leading to the formation of s(2)U34. The protein is tRNA-specific 2-thiouridylase MnmA of Haemophilus ducreyi (strain 35000HP / ATCC 700724).